We begin with the raw amino-acid sequence, 411 residues long: MPATEILNRADIVKAPQVRPQPQTEKPSLIGLLREDMAKLLVEKGVPERQVKMRVSQLWHWLYVRGVSDFDQMSNVSKDMREMLKEHFTVARPEIVEEQVSGDGTRKWLLRFPPRGAGRPVEIETVYIPEEGRGTLCISSQVGCTLTCSFCHTGTQKLVRNLTAEEILAQLLLARDRLGDFPERDTPQGAIVPAEGRKITNIVMMGMGEPLYNFDNVKTALLIASDGDGLSLSKRRITLSTSGIVPEIYRTGEEIGVMLAISLHAVNDELRDMLVPINKKYPLKELMEACRAYPGLSNARRITFEYVMLKDVNDSLQDAKELVKLLKGIPAKINLIPFNPWPGTNYQCSDWEQIEAFADFINQAGYASPIRTPRGRDILAACGQLKSESERMRKVDRLAFEAMMIANHGED.

Glu-124 (proton acceptor) is an active-site residue. The Radical SAM core domain maps to 130-379 (EEGRGTLCIS…IRTPRGRDIL (250 aa)). Cys-137 and Cys-382 form a disulfide bridge. Residues Cys-144, Cys-148, and Cys-151 each coordinate [4Fe-4S] cluster. S-adenosyl-L-methionine-binding positions include 208–209 (GE), Ser-240, 262–264 (SLH), and Asn-339. Residue Cys-382 is the S-methylcysteine intermediate of the active site.

It belongs to the radical SAM superfamily. RlmN family. Requires [4Fe-4S] cluster as cofactor.

The protein resides in the cytoplasm. It catalyses the reaction adenosine(2503) in 23S rRNA + 2 reduced [2Fe-2S]-[ferredoxin] + 2 S-adenosyl-L-methionine = 2-methyladenosine(2503) in 23S rRNA + 5'-deoxyadenosine + L-methionine + 2 oxidized [2Fe-2S]-[ferredoxin] + S-adenosyl-L-homocysteine. The catalysed reaction is adenosine(37) in tRNA + 2 reduced [2Fe-2S]-[ferredoxin] + 2 S-adenosyl-L-methionine = 2-methyladenosine(37) in tRNA + 5'-deoxyadenosine + L-methionine + 2 oxidized [2Fe-2S]-[ferredoxin] + S-adenosyl-L-homocysteine. Specifically methylates position 2 of adenine 2503 in 23S rRNA and position 2 of adenine 37 in tRNAs. m2A2503 modification seems to play a crucial role in the proofreading step occurring at the peptidyl transferase center and thus would serve to optimize ribosomal fidelity. This Sinorhizobium fredii (strain NBRC 101917 / NGR234) protein is Dual-specificity RNA methyltransferase RlmN.